The primary structure comprises 434 residues: Gamma-glutamyl phosphate reductase (434 aa).

Residues 1-11 (MTNSNEAQENA) are compositionally biased toward polar residues. Residues 1-26 (MTNSNEAQENALSPERQAERDEVLAK) form a disordered region. Over residues 16-25 (RQAERDEVLA) the composition is skewed to basic and acidic residues.

Belongs to the gamma-glutamyl phosphate reductase family.

The protein localises to the cytoplasm. The catalysed reaction is L-glutamate 5-semialdehyde + phosphate + NADP(+) = L-glutamyl 5-phosphate + NADPH + H(+). The protein operates within amino-acid biosynthesis; L-proline biosynthesis; L-glutamate 5-semialdehyde from L-glutamate: step 2/2. In terms of biological role, catalyzes the NADPH-dependent reduction of L-glutamate 5-phosphate into L-glutamate 5-semialdehyde and phosphate. The product spontaneously undergoes cyclization to form 1-pyrroline-5-carboxylate. This chain is Gamma-glutamyl phosphate reductase, found in Corynebacterium jeikeium (strain K411).